The sequence spans 141 residues: Hemoglobin subunit alpha (141 aa).

Residues 1–141 (VLSSADKNNI…VSTVLTSKYR (141 aa)) enclose the Globin domain. Phosphoserine is present on Ser-3. N6-succinyllysine occurs at positions 7 and 11. N6-acetyllysine; alternate is present on Lys-16. N6-succinyllysine; alternate is present on Lys-16. Position 24 is a phosphotyrosine (Tyr-24). Ser-35 is subject to Phosphoserine. Lys-40 carries the N6-succinyllysine modification. Ser-49 is subject to Phosphoserine. His-58 lines the O2 pocket. His-87 lines the heme b pocket. Ser-102 bears the Phosphoserine mark. Phosphothreonine is present on residues Thr-108, Thr-134, and Thr-137. At Ser-138 the chain carries Phosphoserine.

It belongs to the globin family. In terms of assembly, heterotetramer of two alpha chains and two beta chains. As to expression, red blood cells.

In terms of biological role, involved in oxygen transport from the lung to the various peripheral tissues. Functionally, hemopressin acts as an antagonist peptide of the cannabinoid receptor CNR1. Hemopressin-binding efficiently blocks cannabinoid receptor CNR1 and subsequent signaling. The polypeptide is Hemoglobin subunit alpha (HBA) (Paguma larvata (Masked palm civet)).